A 334-amino-acid chain; its full sequence is Cyclin N-terminal domain-containing protein 1 (334 aa).

One can recognise a Cyclin N-terminal domain in the interval 29 to 180 (NALLHLAQQN…ILKSLNFQIN (152 aa)).

As to quaternary structure, interacts with PRR19; this interaction promotes crossover formation. Interacts with RFC3 and RFC4; these interactions facilitate crossover formation. Interacts with CDC34; this interaction regulates the cell-cycle progression. As to expression, isoform 2 is expressed in spermatocyte.

It localises to the nucleus. The protein resides in the cytoplasm. The protein localises to the chromosome. Its function is as follows. Plays a role in the different steps of crossover formation during meiotic recombination. Participates in the crossover differentiation step of crossover-specific recombination intermediates through its interaction with PRR19. In addition, stimulates crossover formation through the interactions with RFC3 and RFC4 and simultaneously regulates cell-cycle progression through interactions with CDC34 and subsequent ubiquitination of WEE1. May also participates in an active deselection process that destabilizes or removes excess pre-CO intermediates. The chain is Cyclin N-terminal domain-containing protein 1 from Mus musculus (Mouse).